The sequence spans 287 residues: Inositol-1-monophosphatase (287 aa).

Residues Glu-79, Asp-96, Leu-98, and Asp-99 each coordinate Mg(2+). Glu-79 serves as a coordination point for substrate. Substrate-binding positions include 98–101 (LDGT), Arg-195, and Asp-224. Position 224 (Asp-224) interacts with Mg(2+).

The protein belongs to the inositol monophosphatase superfamily. The cofactor is Mg(2+).

The enzyme catalyses a myo-inositol phosphate + H2O = myo-inositol + phosphate. This Synechocystis sp. (strain ATCC 27184 / PCC 6803 / Kazusa) protein is Inositol-1-monophosphatase (suhB).